We begin with the raw amino-acid sequence, 856 residues long: MKLFDKNERVIKKYWKKVNKINKINLESKNLTELINSLKTIKENITPENIDEYIPEVFAIVREVSKRVIGLRPFDVQLIGAMVLHEGKVAEMKTGEGKTLVATMPVVLNALLGKGVHLVTVNDYLAKRDAMWMGPIYLALGLRVGVINTQNKSYEVIWKNEELAKKALNENLSVWPQGFNGEFLEDEAKNKEALEAYQVELKEISRKEAYECDITYGTNTEFGFDYLRDNLVIDLEDRVQRGHFYAIVDEVDSILIDEARTPLIISGPSKTKASDYIRFNQIAKKLVKDKHFTIDEQKKSVILTDEGIEYIEKLLNIENLYDPEHVNKMYFLLNALKAHYLFKKDVDYIIHNGEIVIVDEFTGRLLPGRRYSGGLHQAIEAKEGVKIKEESVTYATITYQNYFRMYEKLSGMTGTAKTEEEEFKQIYGMEVVVIPTHKPMIRIDRDDLIYRTEDEKFEAVVKEIKKRYEKGQPVLVGTTSIEKSERLSKMLSKEKIPHNVLNAKHHEKEAQIVALAGQKGSVTIATNMAGRGTDIKLGPGVKELGGLLIIGTERHESRRIDNQLRGRAGRQGDPGESIFFLSLEDDIIRIFGGEKLEKIMNLVKIEKGEPIYHPMLTKLIERVQKKVESINFGIRKNLLQMDTVLDTQRRAIYSYREYLLSGNIDEHFNDAIDDFIERRLEEFCEKGVCNVEEIKESLKILNISLDKLPDTRNELKEYLKNLLMEKFENKKKELGEDFPKIGKFIALRVIDENWRQYLEEVEHVKEAVSLRAYGQKDPILEFKKETFRMFDEMMAKIFEQTIIYTLNIRKITDEAEKESENELKKINTQHDEFTLVNRKERRVAEKKGKKKLKVKR.

ATP is bound by residues glutamine 77, glycine 95–threonine 99, and aspartate 534.

This sequence belongs to the SecA family. As to quaternary structure, monomer and homodimer. Part of the essential Sec protein translocation apparatus which comprises SecA, SecYEG and auxiliary proteins SecDF. Other proteins may also be involved.

It is found in the cell inner membrane. Its subcellular location is the cytoplasm. It catalyses the reaction ATP + H2O + cellular proteinSide 1 = ADP + phosphate + cellular proteinSide 2.. Part of the Sec protein translocase complex. Interacts with the SecYEG preprotein conducting channel. Has a central role in coupling the hydrolysis of ATP to the transfer of proteins into and across the cell membrane, serving as an ATP-driven molecular motor driving the stepwise translocation of polypeptide chains across the membrane. This chain is Protein translocase subunit SecA, found in Thermosipho africanus (strain TCF52B).